The following is a 604-amino-acid chain: Netrin-1 (604 aa).

Positions Met-1–Gly-24 are cleaved as a signal peptide. One can recognise a Laminin N-terminal domain in the interval His-47–Arg-284. N-linked (GlcNAc...) asparagine glycosylation is found at Asn-95, Asn-116, and Asn-131. Cystine bridges form between Cys-119–Cys-152, Cys-285–Cys-294, Cys-287–Cys-304, Cys-306–Cys-315, Cys-318–Cys-338, Cys-341–Cys-350, Cys-343–Cys-368, Cys-371–Cys-380, Cys-383–Cys-401, Cys-404–Cys-416, Cys-406–Cys-423, Cys-425–Cys-434, Cys-437–Cys-451, Cys-472–Cys-544, and Cys-491–Cys-601. Laminin EGF-like domains are found at residues Cys-285–Ala-340, Cys-341–Ala-403, and Cys-404–Lys-453. Asn-417 carries N-linked (GlcNAc...) asparagine glycosylation. Residues Cys-472 to Cys-601 enclose the NTR domain. The Cell attachment site motif lies at Arg-530 to Asp-532.

As to quaternary structure, binds to its receptors; DCC, UNC5A, UNC5B, UNC5C and probably UNC5D. Binds to its receptor; DSCAM. Interacts with APP. In the embryo, widely expressed in the developing nervous system and in mesodermal tissues.

It localises to the secreted. The protein resides in the cytoplasm. Its function is as follows. Netrins control guidance of CNS commissural axons and peripheral motor axons. Its association with either DCC or some UNC5 receptors will lead to axon attraction or repulsion, respectively. Binding to UNC5C might cause dissociation of UNC5C from polymerized TUBB3 in microtubules and thereby lead to increased microtubule dynamics and axon repulsion. Involved in dorsal root ganglion axon projection towards the spinal cord. It also serves as a survival factor via its association with its receptors which prevent the initiation of apoptosis. Involved in colorectal tumorigenesis by regulating apoptosis. This is Netrin-1 (Ntn1) from Mus musculus (Mouse).